The chain runs to 527 residues: Protein TIC 56, chloroplastic (527 aa).

The transit peptide at 1–48 (MSSMNFNPFQNWFEKPPNPVPSINFVSLADSFFPKSQSPNFASIGLPK) directs the protein to the chloroplast. Positions 43–67 (SIGLPKFSKKSPKPETAGTDEPGPY) are disordered. N350 bears the Deamidated asparagine mark. A compositionally biased stretch (basic and acidic residues) spans 491 to 508 (RREEELREEDLKHYSGRT). Residues 491 to 527 (RREEELREEDLKHYSGRTDEDEEEEEEEDDDSNSKKD) are disordered. The segment covering 509–521 (DEDEEEEEEEDDD) has biased composition (acidic residues).

Part of the Tic complex. Component of the 1-MD complex, composed of TIC20-I, TIC214, TIC100 and TIC56. Interacts with the translocating preproteins. Hydrolysis of ATP is essential for the formation of this complex. The 1-MD complex interacts with TIC21.

The protein resides in the plastid. It localises to the chloroplast inner membrane. Involved in protein precursor import into chloroplasts. May be part of an intermediate translocation complex acting as a protein-conducting channel at the inner envelope. This Arabidopsis thaliana (Mouse-ear cress) protein is Protein TIC 56, chloroplastic.